The following is a 98-amino-acid chain: uncharacterized protein (98 aa).

It localises to the cytoplasm. This is an uncharacterized protein from Saccharomyces cerevisiae (strain ATCC 204508 / S288c) (Baker's yeast).